Consider the following 371-residue polypeptide: MTSLSDILASSAEAGLSLQRSDGSMPAGHNGPYHDPETPVRNTSHWLVTFLKAHELTDENRFRQAASDAVSYLLSEEARPHGHTFEHRQNDTKDRCNGLMGQAWSLEALALAARALDNERAAAVAADVFLSHPFCDKLKLWQRVDTDGTILGFDRTFNHQLWFAASGGLVAHTAPQEVSQRVRDFLDSLPSTIDLYENGLIRHPLRPSMDLSELAESVTHDVHRSMVRNHLLHYLRPPRSKRRLRNKAEGYHSFNLYALAILAREFPSHSVWSTDLLSDILEYTLSEEFREATTDNKFSHPYNPPGFEVPAAMETFSVGSYKEREMWVNEQIQHSFDPNTSLLTRGTDDKQTHAARLYEATRLDDYEIYLD.

Residues 19-39 (QRSDGSMPAGHNGPYHDPETP) are disordered.

It localises to the cytoplasm. It participates in cell surface structure biogenesis; S-layer biogenesis. Functionally, putative isomerase involved in the N-glycosylation pathway. Required for the appearance of the methyl ester of hexuronic acid found at position four of the pentasaccharide N-linked to the S-layer glycoprotein. Either involved in preparing the third sugar for attachment of the fourth pentasaccharide subunit or processing the fourth sugar prior to its addition to the lipid-linked trisaccharide. The chain is Archaeal glycosylation protein Q (aglQ) from Haloferax volcanii (strain ATCC 29605 / DSM 3757 / JCM 8879 / NBRC 14742 / NCIMB 2012 / VKM B-1768 / DS2) (Halobacterium volcanii).